The following is a 453-amino-acid chain: MAAAALRGGWCRCPRRCLGSGIQFLSSHNLPRGGSSYQISRPGGELTLTKSYSSGSRKGFLSGLLDNIKQELAQNKEMKESIKKFRDEAKKLEESDALQEARRKYKTIESETVRTSEAIKKKLGELTGTVKESLDEVSKSDLGRKIKEGVEEAARTAKQSAESVSKGGEKLGKTAAFKAISQGVESVKKEIDESVLGHTGTYRRPERLRKRTEFAGAKFKESKVFEANEEALGVVLHKDSKWYQQWKDFKDNNVVFNRFFEMKMKYDESDNVLIRASRALTDKVTDLLGGLFSKTEMSEVLTEILRVDPTFDKDRFLHQCETDIIPNILEAMISGELDILKDWCYEATYNQLAHSIQQAKALGLQFHSRILDISNVDLAMGKMMEQGPVLIVTFQAQLVMVIKNPKGEVFDGDPDKVLRMLYVWALCRDQEELNPYAAWRLLDISASSTEQIL.

At T129 the chain carries Phosphothreonine. Residue 167–174 (GGEKLGKT) coordinates ATP. K178 is subject to N6-succinyllysine. A Phosphoserine modification is found at S181. Position 218 is an N6-succinyllysine (K218).

The protein belongs to the Tim44 family. Probable component of the PAM complex at least composed of a mitochondrial HSP70 protein, GRPEL1 or GRPEL2, TIMM44, TIMM16/PAM16 and TIMM14/DNAJC19. The complex interacts with the TIMM23 component of the TIM23 complex. Interacts with SLC25A4/ANT1 and SLC25A5/ANT2; leading to inhibit the presequence translocase TIMM23, thereby promoting stabilization of PINK1.

The protein localises to the mitochondrion inner membrane. It is found in the mitochondrion matrix. Its function is as follows. Essential component of the PAM complex, a complex required for the translocation of transit peptide-containing proteins from the inner membrane into the mitochondrial matrix in an ATP-dependent manner. Recruits mitochondrial HSP70 to drive protein translocation into the matrix using ATP as an energy source. This Rattus norvegicus (Rat) protein is Mitochondrial import inner membrane translocase subunit TIM44 (Timm44).